We begin with the raw amino-acid sequence, 483 residues long: Aspartyl/glutamyl-tRNA(Asn/Gln) amidotransferase subunit B (483 aa).

The protein belongs to the GatB/GatE family. GatB subfamily. In terms of assembly, heterotrimer of A, B and C subunits.

The catalysed reaction is L-glutamyl-tRNA(Gln) + L-glutamine + ATP + H2O = L-glutaminyl-tRNA(Gln) + L-glutamate + ADP + phosphate + H(+). The enzyme catalyses L-aspartyl-tRNA(Asn) + L-glutamine + ATP + H2O = L-asparaginyl-tRNA(Asn) + L-glutamate + ADP + phosphate + 2 H(+). Its function is as follows. Allows the formation of correctly charged Asn-tRNA(Asn) or Gln-tRNA(Gln) through the transamidation of misacylated Asp-tRNA(Asn) or Glu-tRNA(Gln) in organisms which lack either or both of asparaginyl-tRNA or glutaminyl-tRNA synthetases. The reaction takes place in the presence of glutamine and ATP through an activated phospho-Asp-tRNA(Asn) or phospho-Glu-tRNA(Gln). This chain is Aspartyl/glutamyl-tRNA(Asn/Gln) amidotransferase subunit B, found in Rickettsia conorii (strain ATCC VR-613 / Malish 7).